The following is a 275-amino-acid chain: Protein unc-50 homolog (275 aa).

The segment covering 1–26 has biased composition (polar residues); the sequence is MTQYSHVKYTQSPTPSVVSGYSSASR. The disordered stretch occupies residues 1–39; that stretch reads MTQYSHVKYTQSPTPSVVSGYSSASRLHSPLPPPANHRR. The Cytoplasmic segment spans residues 1 to 99; that stretch reads MTQYSHVKYT…TKSQFARDDP (99 aa). A helical transmembrane segment spans residues 100–120; it reads AFLVLLVVCLCVTSLGFAYVL. Topologically, residues 121 to 129 are lumenal; the sequence is GLSFWQSIS. Residues 130–150 traverse the membrane as a helical segment; it reads FIFYVVFVDCIFVGIIIASFF. Over 151-178 the chain is Cytoplasmic; it reads WAVTNRYLRTNSLEPDIEWGYAFDVHLN. Residues 179–199 traverse the membrane as a helical segment; sequence AFFPPLMLLHFIQLFFYNWLI. The Lumenal portion of the chain corresponds to 200–207; the sequence is SQTWFISR. The chain crosses the membrane as a helical span at residues 208–228; the sequence is FLGNTFWLMGMGYYVYITFLG. The Cytoplasmic portion of the chain corresponds to 229–239; it reads YNCIPHLKNTR. Residues 240–260 traverse the membrane as a helical segment; the sequence is IILIALPIIFLLFLVVTIIGW. Residues 261-275 are Lumenal-facing; sequence NATISFVNFYKYRVY.

This sequence belongs to the unc-50 family.

Its subcellular location is the golgi apparatus membrane. In terms of biological role, required for cell surface expression of acetylcholine receptors. This is Protein unc-50 homolog from Drosophila melanogaster (Fruit fly).